We begin with the raw amino-acid sequence, 288 residues long: Acetyl-coenzyme A carboxylase carboxyl transferase subunit beta (288 aa).

The 255-residue stretch at 34–288 (LFAKCPGCKQ…TLLSFHGGVQ (255 aa)) folds into the CoA carboxyltransferase N-terminal domain. Cysteine 38, cysteine 41, cysteine 56, and cysteine 59 together coordinate Zn(2+). Residues 38 to 59 (CPGCKQAIYQKDLGQAKICPNC) form a C4-type zinc finger.

The protein belongs to the AccD/PCCB family. Acetyl-CoA carboxylase is a heterohexamer composed of biotin carboxyl carrier protein (AccB), biotin carboxylase (AccC) and two subunits each of ACCase subunit alpha (AccA) and ACCase subunit beta (AccD). Requires Zn(2+) as cofactor.

The protein localises to the cytoplasm. It catalyses the reaction N(6)-carboxybiotinyl-L-lysyl-[protein] + acetyl-CoA = N(6)-biotinyl-L-lysyl-[protein] + malonyl-CoA. Its pathway is lipid metabolism; malonyl-CoA biosynthesis; malonyl-CoA from acetyl-CoA: step 1/1. Functionally, component of the acetyl coenzyme A carboxylase (ACC) complex. Biotin carboxylase (BC) catalyzes the carboxylation of biotin on its carrier protein (BCCP) and then the CO(2) group is transferred by the transcarboxylase to acetyl-CoA to form malonyl-CoA. The protein is Acetyl-coenzyme A carboxylase carboxyl transferase subunit beta of Streptococcus thermophilus (strain CNRZ 1066).